Here is a 62-residue protein sequence, read N- to C-terminus: DNA-directed RNA polymerase subunit omega (62 aa).

The protein belongs to the RNA polymerase subunit omega family. In terms of assembly, the RNAP catalytic core consists of 2 alpha, 1 beta, 1 beta' and 1 omega subunit. When a sigma factor is associated with the core the holoenzyme is formed, which can initiate transcription.

It catalyses the reaction RNA(n) + a ribonucleoside 5'-triphosphate = RNA(n+1) + diphosphate. Its function is as follows. Promotes RNA polymerase assembly. Latches the N- and C-terminal regions of the beta' subunit thereby facilitating its interaction with the beta and alpha subunits. This chain is DNA-directed RNA polymerase subunit omega, found in Wigglesworthia glossinidia brevipalpis.